We begin with the raw amino-acid sequence, 105 residues long: Large ribosomal subunit protein uL24 (105 aa).

Belongs to the universal ribosomal protein uL24 family. Part of the 50S ribosomal subunit.

One of two assembly initiator proteins, it binds directly to the 5'-end of the 23S rRNA, where it nucleates assembly of the 50S subunit. Its function is as follows. One of the proteins that surrounds the polypeptide exit tunnel on the outside of the subunit. The chain is Large ribosomal subunit protein uL24 from Clostridium botulinum (strain 657 / Type Ba4).